The following is a 427-amino-acid chain: Peptidase B (427 aa).

Mn(2+)-binding residues include K195 and D200. K207 is a catalytic residue. D218, D277, and E279 together coordinate Mn(2+). R281 is a catalytic residue.

It belongs to the peptidase M17 family. As to quaternary structure, homohexamer. The cofactor is Mn(2+).

It localises to the cytoplasm. The enzyme catalyses Release of an N-terminal amino acid, Xaa, from a peptide or arylamide. Xaa is preferably Glu or Asp but may be other amino acids, including Leu, Met, His, Cys and Gln.. Functionally, probably plays an important role in intracellular peptide degradation. This Citrobacter koseri (strain ATCC BAA-895 / CDC 4225-83 / SGSC4696) protein is Peptidase B.